Here is a 313-residue protein sequence, read N- to C-terminus: Dimethyladenosine transferase (313 aa).

S-adenosyl-L-methionine-binding residues include His-37, Leu-39, Gly-64, Glu-85, Asp-113, and Asn-128.

This sequence belongs to the class I-like SAM-binding methyltransferase superfamily. rRNA adenine N(6)-methyltransferase family. In terms of assembly, part of the small subunit (SSU) processome, composed of more than 70 proteins and the RNA chaperone small nucleolar RNA (snoRNA) U3.

It is found in the nucleus. The protein resides in the nucleoplasm. The protein localises to the nucleolus. The catalysed reaction is adenosine(1779)/adenosine(1780) in 18S rRNA + 4 S-adenosyl-L-methionine = N(6)-dimethyladenosine(1779)/N(6)-dimethyladenosine(1780) in 18S rRNA + 4 S-adenosyl-L-homocysteine + 4 H(+). Functionally, specifically dimethylates two adjacent adenosines in the loop of a conserved hairpin near the 3'-end of 18S rRNA in the 40S particle. Involved in the pre-rRNA processing steps leading to small-subunit rRNA production independently of its RNA-modifying catalytic activity. Part of the small subunit (SSU) processome, first precursor of the small eukaryotic ribosomal subunit. During the assembly of the SSU processome in the nucleolus, many ribosome biogenesis factors, an RNA chaperone and ribosomal proteins associate with the nascent pre-rRNA and work in concert to generate RNA folding, modifications, rearrangements and cleavage as well as targeted degradation of pre-ribosomal RNA by the RNA exosome. The protein is Dimethyladenosine transferase (Dimt1) of Mus musculus (Mouse).